The primary structure comprises 334 residues: Phosphate acyltransferase (334 aa).

This sequence belongs to the PlsX family. As to quaternary structure, homodimer. Probably interacts with PlsY.

The protein localises to the cytoplasm. It catalyses the reaction a fatty acyl-[ACP] + phosphate = an acyl phosphate + holo-[ACP]. The protein operates within lipid metabolism; phospholipid metabolism. In terms of biological role, catalyzes the reversible formation of acyl-phosphate (acyl-PO(4)) from acyl-[acyl-carrier-protein] (acyl-ACP). This enzyme utilizes acyl-ACP as fatty acyl donor, but not acyl-CoA. The chain is Phosphate acyltransferase from Mycoplasmopsis agalactiae (strain NCTC 10123 / CIP 59.7 / PG2) (Mycoplasma agalactiae).